A 505-amino-acid polypeptide reads, in one-letter code: Maturase K (505 aa).

The protein belongs to the intron maturase 2 family. MatK subfamily.

Its subcellular location is the plastid. The protein localises to the chloroplast. Functionally, usually encoded in the trnK tRNA gene intron. Probably assists in splicing its own and other chloroplast group II introns. In Micranthes integrifolia (Wholeleaf saxifrage), this protein is Maturase K.